The following is a 318-amino-acid chain: Methionyl-tRNA formyltransferase (318 aa).

115–118 (SLLP) lines the (6S)-5,6,7,8-tetrahydrofolate pocket.

This sequence belongs to the Fmt family.

The catalysed reaction is L-methionyl-tRNA(fMet) + (6R)-10-formyltetrahydrofolate = N-formyl-L-methionyl-tRNA(fMet) + (6S)-5,6,7,8-tetrahydrofolate + H(+). Functionally, attaches a formyl group to the free amino group of methionyl-tRNA(fMet). The formyl group appears to play a dual role in the initiator identity of N-formylmethionyl-tRNA by promoting its recognition by IF2 and preventing the misappropriation of this tRNA by the elongation apparatus. The protein is Methionyl-tRNA formyltransferase of Deinococcus radiodurans (strain ATCC 13939 / DSM 20539 / JCM 16871 / CCUG 27074 / LMG 4051 / NBRC 15346 / NCIMB 9279 / VKM B-1422 / R1).